Here is a 186-residue protein sequence, read N- to C-terminus: Peptidyl-tRNA hydrolase (186 aa).

Residue tyrosine 13 participates in tRNA binding. Histidine 18 serves as the catalytic Proton acceptor. Residues tyrosine 59, asparagine 61, and asparagine 107 each contribute to the tRNA site.

The protein belongs to the PTH family. As to quaternary structure, monomer.

It localises to the cytoplasm. It catalyses the reaction an N-acyl-L-alpha-aminoacyl-tRNA + H2O = an N-acyl-L-amino acid + a tRNA + H(+). Hydrolyzes ribosome-free peptidyl-tRNAs (with 1 or more amino acids incorporated), which drop off the ribosome during protein synthesis, or as a result of ribosome stalling. In terms of biological role, catalyzes the release of premature peptidyl moieties from peptidyl-tRNA molecules trapped in stalled 50S ribosomal subunits, and thus maintains levels of free tRNAs and 50S ribosomes. The protein is Peptidyl-tRNA hydrolase of Thermotoga sp. (strain RQ2).